An 84-amino-acid chain; its full sequence is Small ribosomal subunit protein uS17 (84 aa).

It belongs to the universal ribosomal protein uS17 family. Part of the 30S ribosomal subunit.

Functionally, one of the primary rRNA binding proteins, it binds specifically to the 5'-end of 16S ribosomal RNA. The sequence is that of Small ribosomal subunit protein uS17 from Vibrio parahaemolyticus serotype O3:K6 (strain RIMD 2210633).